The following is a 296-amino-acid chain: Nucleotide-binding protein SAG0531 (296 aa).

13–20 (GMSGAGKT) provides a ligand contact to ATP. 63 to 66 (DMRS) is a GTP binding site.

It belongs to the RapZ-like family.

In terms of biological role, displays ATPase and GTPase activities. This is Nucleotide-binding protein SAG0531 from Streptococcus agalactiae serotype V (strain ATCC BAA-611 / 2603 V/R).